We begin with the raw amino-acid sequence, 460 residues long: V-type ATP synthase beta chain 2 (460 aa).

It belongs to the ATPase alpha/beta chains family.

Functionally, produces ATP from ADP in the presence of a proton gradient across the membrane. The V-type beta chain is a regulatory subunit. The sequence is that of V-type ATP synthase beta chain 2 from Clostridium tetani (strain Massachusetts / E88).